Here is a 287-residue protein sequence, read N- to C-terminus: 4-diphosphocytidyl-2-C-methyl-D-erythritol kinase (287 aa).

Lys22 is a catalytic residue. Pro102–Ser112 contributes to the ATP binding site. Asp139 is a catalytic residue.

This sequence belongs to the GHMP kinase family. IspE subfamily.

The enzyme catalyses 4-CDP-2-C-methyl-D-erythritol + ATP = 4-CDP-2-C-methyl-D-erythritol 2-phosphate + ADP + H(+). The protein operates within isoprenoid biosynthesis; isopentenyl diphosphate biosynthesis via DXP pathway; isopentenyl diphosphate from 1-deoxy-D-xylulose 5-phosphate: step 3/6. In terms of biological role, catalyzes the phosphorylation of the position 2 hydroxy group of 4-diphosphocytidyl-2C-methyl-D-erythritol. The chain is 4-diphosphocytidyl-2-C-methyl-D-erythritol kinase from Dinoroseobacter shibae (strain DSM 16493 / NCIMB 14021 / DFL 12).